The sequence spans 201 residues: Large ribosomal subunit protein uL4 (201 aa).

Positions arginine 44 to glycine 71 are disordered.

Belongs to the universal ribosomal protein uL4 family. Part of the 50S ribosomal subunit.

Its function is as follows. One of the primary rRNA binding proteins, this protein initially binds near the 5'-end of the 23S rRNA. It is important during the early stages of 50S assembly. It makes multiple contacts with different domains of the 23S rRNA in the assembled 50S subunit and ribosome. Forms part of the polypeptide exit tunnel. The chain is Large ribosomal subunit protein uL4 from Escherichia fergusonii (strain ATCC 35469 / DSM 13698 / CCUG 18766 / IAM 14443 / JCM 21226 / LMG 7866 / NBRC 102419 / NCTC 12128 / CDC 0568-73).